Here is a 361-residue protein sequence, read N- to C-terminus: Ribosomal RNA large subunit methyltransferase M (361 aa).

Residues Ser-187, 220–223 (CPGG), Asp-239, Asp-259, and Asp-276 contribute to the S-adenosyl-L-methionine site. Lys-305 serves as the catalytic Proton acceptor.

This sequence belongs to the class I-like SAM-binding methyltransferase superfamily. RNA methyltransferase RlmE family. RlmM subfamily. As to quaternary structure, monomer.

It is found in the cytoplasm. It catalyses the reaction cytidine(2498) in 23S rRNA + S-adenosyl-L-methionine = 2'-O-methylcytidine(2498) in 23S rRNA + S-adenosyl-L-homocysteine + H(+). Catalyzes the 2'-O-methylation at nucleotide C2498 in 23S rRNA. The protein is Ribosomal RNA large subunit methyltransferase M of Shewanella amazonensis (strain ATCC BAA-1098 / SB2B).